Here is a 185-residue protein sequence, read N- to C-terminus: Ribosome-recycling factor (185 aa).

Belongs to the RRF family.

The protein resides in the cytoplasm. Functionally, responsible for the release of ribosomes from messenger RNA at the termination of protein biosynthesis. May increase the efficiency of translation by recycling ribosomes from one round of translation to another. The sequence is that of Ribosome-recycling factor from Coxiella burnetii (strain RSA 493 / Nine Mile phase I).